A 1755-amino-acid chain; its full sequence is Transposon Ty1-LR3 Gag-Pol polyprotein (1755 aa).

Residues Met-1–Ser-16 show a composition bias toward low complexity. Disordered stretches follow at residues Met-1–Gln-93, Pro-126–Pro-173, and Gly-352–Thr-421. 2 stretches are compositionally biased toward polar residues: residues Thr-48–Ser-60 and Gln-127–Phe-152. Residues Thr-153–Thr-165 are compositionally biased toward low complexity. Positions Asn-299 to His-401 are RNA-binding. The segment covering Asn-402–Ser-418 has biased composition (low complexity). Ser-416 bears the Phosphoserine mark. Asp-461 (for protease activity; shared with dimeric partner) is an active-site residue. The integrase-type zinc finger-like stretch occupies residues Asn-583–Cys-640. Residues Asn-660–Asp-829 form the Integrase catalytic domain. Mg(2+)-binding residues include Asp-671 and Asp-736. Disordered stretches follow at residues Ser-956–Lys-1087, Arg-1092–Pro-1111, and Ala-1129–Tyr-1172. Residues Ser-960 to Thr-969 show a composition bias toward low complexity. A compositionally biased stretch (polar residues) spans Ser-1005–Thr-1015. Over residues Glu-1038–Asp-1052 the composition is skewed to basic and acidic residues. 2 stretches are compositionally biased toward polar residues: residues Ser-1053–Asp-1082 and Pro-1101–Pro-1111. The short motif at Lys-1178 to Arg-1212 is the Bipartite nuclear localization signal element. The Reverse transcriptase Ty1/copia-type domain maps to Asn-1338–Gln-1476. Mg(2+)-binding residues include Asp-1346, Asp-1427, Asp-1428, Asp-1610, Glu-1652, and Asp-1685. The 143-residue stretch at Asp-1610–Lys-1752 folds into the RNase H Ty1/copia-type domain.

As to quaternary structure, the capsid protein forms a homotrimer, from which the VLPs are assembled. The protease is a homodimer, whose active site consists of two apposed aspartic acid residues. Post-translationally, initially, virus-like particles (VLPs) are composed of the structural unprocessed proteins Gag and Gag-Pol, and also contain the host initiator methionine tRNA (tRNA(i)-Met) which serves as a primer for minus-strand DNA synthesis, and a dimer of genomic Ty RNA. Processing of the polyproteins occurs within the particle and proceeds by an ordered pathway, called maturation. First, the protease (PR) is released by autocatalytic cleavage of the Gag-Pol polyprotein yielding capsid protein p45 and a Pol-p154 precursor protein. This cleavage is a prerequisite for subsequent processing of Pol-p154 at the remaining sites to release the mature structural and catalytic proteins. Maturation takes place prior to the RT reaction and is required to produce transposition-competent VLPs.

The protein resides in the cytoplasm. Its subcellular location is the nucleus. The catalysed reaction is DNA(n) + a 2'-deoxyribonucleoside 5'-triphosphate = DNA(n+1) + diphosphate. It carries out the reaction Endonucleolytic cleavage to 5'-phosphomonoester.. Its function is as follows. Capsid protein (CA) is the structural component of the virus-like particle (VLP), forming the shell that encapsulates the retrotransposons dimeric RNA genome. The particles are assembled from trimer-clustered units and there are holes in the capsid shells that allow for the diffusion of macromolecules. CA also has nucleocapsid-like chaperone activity, promoting primer tRNA(i)-Met annealing to the multipartite primer-binding site (PBS), dimerization of Ty1 RNA and initiation of reverse transcription. Functionally, the aspartyl protease (PR) mediates the proteolytic cleavages of the Gag and Gag-Pol polyproteins after assembly of the VLP. Reverse transcriptase/ribonuclease H (RT) is a multifunctional enzyme that catalyzes the conversion of the retro-elements RNA genome into dsDNA within the VLP. The enzyme displays a DNA polymerase activity that can copy either DNA or RNA templates, and a ribonuclease H (RNase H) activity that cleaves the RNA strand of RNA-DNA heteroduplexes during plus-strand synthesis and hydrolyzes RNA primers. The conversion leads to a linear dsDNA copy of the retrotransposon that includes long terminal repeats (LTRs) at both ends. In terms of biological role, integrase (IN) targets the VLP to the nucleus, where a subparticle preintegration complex (PIC) containing at least integrase and the newly synthesized dsDNA copy of the retrotransposon must transit the nuclear membrane. Once in the nucleus, integrase performs the integration of the dsDNA into the host genome. The chain is Transposon Ty1-LR3 Gag-Pol polyprotein (TY1B-LR3) from Saccharomyces cerevisiae (strain ATCC 204508 / S288c) (Baker's yeast).